The sequence spans 264 residues: Pyridoxine 5'-phosphate synthase (264 aa).

Asn28 lines the 3-amino-2-oxopropyl phosphate pocket. 30 to 31 contacts 1-deoxy-D-xylulose 5-phosphate; that stretch reads DH. Position 39 (Arg39) interacts with 3-amino-2-oxopropyl phosphate. The Proton acceptor role is filled by His64. Positions 66 and 71 each coordinate 1-deoxy-D-xylulose 5-phosphate. Residue Glu91 is the Proton acceptor of the active site. 1-deoxy-D-xylulose 5-phosphate is bound at residue Thr121. Residue His217 is the Proton donor of the active site. 3-amino-2-oxopropyl phosphate-binding positions include Gly218 and 239-240; that span reads GH.

This sequence belongs to the PNP synthase family. Homooctamer; tetramer of dimers.

Its subcellular location is the cytoplasm. It catalyses the reaction 3-amino-2-oxopropyl phosphate + 1-deoxy-D-xylulose 5-phosphate = pyridoxine 5'-phosphate + phosphate + 2 H2O + H(+). Its pathway is cofactor biosynthesis; pyridoxine 5'-phosphate biosynthesis; pyridoxine 5'-phosphate from D-erythrose 4-phosphate: step 5/5. Functionally, catalyzes the complicated ring closure reaction between the two acyclic compounds 1-deoxy-D-xylulose-5-phosphate (DXP) and 3-amino-2-oxopropyl phosphate (1-amino-acetone-3-phosphate or AAP) to form pyridoxine 5'-phosphate (PNP) and inorganic phosphate. In Psychrobacter arcticus (strain DSM 17307 / VKM B-2377 / 273-4), this protein is Pyridoxine 5'-phosphate synthase.